The primary structure comprises 496 residues: Probable cytosol aminopeptidase (496 aa).

2 residues coordinate Mn(2+): Lys-266 and Asp-271. The active site involves Lys-278. Residues Asp-290, Asp-349, and Glu-351 each coordinate Mn(2+). Arg-353 is a catalytic residue.

It belongs to the peptidase M17 family. It depends on Mn(2+) as a cofactor.

The protein resides in the cytoplasm. The catalysed reaction is Release of an N-terminal amino acid, Xaa-|-Yaa-, in which Xaa is preferably Leu, but may be other amino acids including Pro although not Arg or Lys, and Yaa may be Pro. Amino acid amides and methyl esters are also readily hydrolyzed, but rates on arylamides are exceedingly low.. It carries out the reaction Release of an N-terminal amino acid, preferentially leucine, but not glutamic or aspartic acids.. Presumably involved in the processing and regular turnover of intracellular proteins. Catalyzes the removal of unsubstituted N-terminal amino acids from various peptides. In Trichodesmium erythraeum (strain IMS101), this protein is Probable cytosol aminopeptidase.